The primary structure comprises 308 residues: Ribosomal protein L11 methyltransferase (308 aa).

Positions 157, 178, 200, and 243 each coordinate S-adenosyl-L-methionine.

It belongs to the methyltransferase superfamily. PrmA family.

The protein localises to the cytoplasm. It carries out the reaction L-lysyl-[protein] + 3 S-adenosyl-L-methionine = N(6),N(6),N(6)-trimethyl-L-lysyl-[protein] + 3 S-adenosyl-L-homocysteine + 3 H(+). Functionally, methylates ribosomal protein L11. The sequence is that of Ribosomal protein L11 methyltransferase from Pelotomaculum thermopropionicum (strain DSM 13744 / JCM 10971 / SI).